A 381-amino-acid polypeptide reads, in one-letter code: Alkanesulfonate monooxygenase (381 aa).

It belongs to the SsuD family. In terms of assembly, homotetramer.

The catalysed reaction is an alkanesulfonate + FMNH2 + O2 = an aldehyde + FMN + sulfite + H2O + 2 H(+). In terms of biological role, catalyzes the desulfonation of aliphatic sulfonates. The polypeptide is Alkanesulfonate monooxygenase (Escherichia coli O7:K1 (strain IAI39 / ExPEC)).